Reading from the N-terminus, the 220-residue chain is Deoxyribose-phosphate aldolase (220 aa).

The active-site Proton donor/acceptor is aspartate 89. The active-site Schiff-base intermediate with acetaldehyde is the lysine 151. Lysine 180 (proton donor/acceptor) is an active-site residue.

The protein belongs to the DeoC/FbaB aldolase family. DeoC type 1 subfamily.

The protein localises to the cytoplasm. The enzyme catalyses 2-deoxy-D-ribose 5-phosphate = D-glyceraldehyde 3-phosphate + acetaldehyde. It functions in the pathway carbohydrate degradation; 2-deoxy-D-ribose 1-phosphate degradation; D-glyceraldehyde 3-phosphate and acetaldehyde from 2-deoxy-alpha-D-ribose 1-phosphate: step 2/2. In terms of biological role, catalyzes a reversible aldol reaction between acetaldehyde and D-glyceraldehyde 3-phosphate to generate 2-deoxy-D-ribose 5-phosphate. This Mycoplasmopsis pulmonis (strain UAB CTIP) (Mycoplasma pulmonis) protein is Deoxyribose-phosphate aldolase.